We begin with the raw amino-acid sequence, 430 residues long: Tol-Pal system protein TolB (430 aa).

An N-terminal signal peptide occupies residues 1–21; sequence MKQAFRLMVGLLVLWASVLHA.

This sequence belongs to the TolB family. As to quaternary structure, the Tol-Pal system is composed of five core proteins: the inner membrane proteins TolA, TolQ and TolR, the periplasmic protein TolB and the outer membrane protein Pal. They form a network linking the inner and outer membranes and the peptidoglycan layer.

It localises to the periplasm. In terms of biological role, part of the Tol-Pal system, which plays a role in outer membrane invagination during cell division and is important for maintaining outer membrane integrity. TolB occupies a key intermediary position in the Tol-Pal system because it communicates directly with both membrane-embedded components, Pal in the outer membrane and TolA in the inner membrane. The sequence is that of Tol-Pal system protein TolB from Edwardsiella ictaluri (strain 93-146).